The chain runs to 201 residues: Lipoprotein signal peptidase (201 aa).

3 consecutive transmembrane segments (helical) span residues 33–53 (LLLS…VLAV), 86–106 (GYTW…FWMG), and 110–130 (VSSW…GNLV). Catalysis depends on residues Asp-146 and Asp-160. The chain crosses the membrane as a helical span at residues 158 to 178 (VADPSVVVGAILLVVLSIFGF).

The protein belongs to the peptidase A8 family.

The protein localises to the cell membrane. It catalyses the reaction Release of signal peptides from bacterial membrane prolipoproteins. Hydrolyzes -Xaa-Yaa-Zaa-|-(S,diacylglyceryl)Cys-, in which Xaa is hydrophobic (preferably Leu), and Yaa (Ala or Ser) and Zaa (Gly or Ala) have small, neutral side chains.. It functions in the pathway protein modification; lipoprotein biosynthesis (signal peptide cleavage). In terms of biological role, this protein specifically catalyzes the removal of signal peptides from prolipoproteins. The chain is Lipoprotein signal peptidase from Mycobacterium leprae (strain Br4923).